A 701-amino-acid polypeptide reads, in one-letter code: Elongation factor G (701 aa).

The 284-residue stretch at 8-291 (GRYRNIGIVA…AVIDYLPAPT (284 aa)) folds into the tr-type G domain. Residues 17–24 (AHVDAGKT), 89–93 (DTPGH), and 143–146 (NKMD) contribute to the GTP site.

This sequence belongs to the TRAFAC class translation factor GTPase superfamily. Classic translation factor GTPase family. EF-G/EF-2 subfamily.

It is found in the cytoplasm. Its function is as follows. Catalyzes the GTP-dependent ribosomal translocation step during translation elongation. During this step, the ribosome changes from the pre-translocational (PRE) to the post-translocational (POST) state as the newly formed A-site-bound peptidyl-tRNA and P-site-bound deacylated tRNA move to the P and E sites, respectively. Catalyzes the coordinated movement of the two tRNA molecules, the mRNA and conformational changes in the ribosome. This chain is Elongation factor G, found in Pseudomonas savastanoi pv. phaseolicola (strain 1448A / Race 6) (Pseudomonas syringae pv. phaseolicola (strain 1448A / Race 6)).